The primary structure comprises 953 residues: Nucleotide-binding oligomerization domain-containing protein 1 (953 aa).

The CARD domain maps to 15–107; the sequence is GCHSHIKLLK…VDLRLWLSEI (93 aa). Residues 196–531 enclose the NACHT domain; the sequence is ETVFVFGDAG…AFFTAFFLVA (336 aa). Residue 202–209 participates in ATP binding; that stretch reads GDAGVGKS. Residues cysteine 558 and cysteine 567 are each lipidated (S-palmitoyl cysteine). LRR repeat units follow at residues 702–725, 727–750, 755–778, 783–806, 839–862, 867–890, 895–918, and 923–946; these read FHRQ…ELQP, FSRL…VLCE, YKIV…YVAQ, CRGL…CVAL, HPSL…SLAQ, NTTL…CFAE, NQTL…QLAR, and NTAI…VFEN. The S-palmitoyl cysteine moiety is linked to residue cysteine 952.

Belongs to the NOD1-NOD2 family. In terms of assembly, homooligomer: homooligomerizes following ligand-binding, promoting RIPK2 recruitment. Interacts (via CARD domain) with RIPK2 (via CARD domain). Following RIPK2 recruitment, RIPK2 homooligomerizes via its CARD domain and forms long filaments named RIPosomes. Interacts (via CARD domain) with ubiquitin; inhibiting interaction with RIPK2. Interacts with ARHGEF2. Interacts with NLRP10 and recruits it to the cell membrane following invasive bacterial infection. Interacts with IFIH1; this interaction promotes transcription of antiviral genes and inhibition of viral replication. Interacts with Irgm1; promoting NOD1 degradation. Interacts with ATG16L1. In terms of processing, ubiquitinated. 'Lys-48'-linked polyubiquitination by RNF34 promotes proteasomal degradation and thereby negatively regulates NOD1 for instance in NF-kappa-B activation. Post-translationally, palmitoylated. Palmitoylation is required for proper recruitment to the bacterial entry site and hence for proper signaling upon cognate peptidoglycan detection. Degraded via selective autophagy following interaction with Irgm1. Irgm1 promotes NOD1-RIPK2 RIPosome recruitment to autophagosome membranes, promoting their SQSTM1/p62-dependent autophagic degradation. In terms of tissue distribution, although ubiquitously expressed, NOD1 levels are more abundant in immune cells, the gastrointestinal tract, and adipose tissue.

The protein localises to the cell membrane. It is found in the apical cell membrane. Its subcellular location is the basolateral cell membrane. The protein resides in the cytoplasm. Pattern recognition receptor (PRR) that detects bacterial peptidoglycan fragments and other danger signals and thus participates in both innate and adaptive immune responses. Specifically recognizes and binds gamma-D-glutamyl-meso-diaminopimelic acid (iE-DAP), a dipeptide present in peptidoglycan of Gram-negative bacteria. Preferentially binds iE-DAP in tetrapeptide-containing muropeptides (MurNAc-TetraDAP or TetraDAP). Ligand binding triggers oligomerization that facilitates the binding and subsequent activation of the proximal adapter receptor-interacting RIPK2. Following recruitment, RIPK2 undergoes 'Met-1'- (linear) and 'Lys-63'-linked polyubiquitination by E3 ubiquitin-protein ligases XIAP, BIRC2, BIRC3 and the LUBAC complex, becoming a scaffolding protein for downstream effectors, triggering activation of the NF-kappa-B and MAP kinases signaling. This in turn leads to the transcriptional activation of hundreds of genes involved in immune response. Also acts as a regulator of antiviral response elicited by dsRNA and the expression of RLR pathway members by targeting IFIH1 and TRAF3 to modulate the formation of IFIH1-MAVS and TRAF3-MAVS complexes leading to increased transcription of type I IFNs. Also acts as a regulator of autophagy via its interaction with ATG16L1, possibly by recruiting ATG16L1 at the site of bacterial entry. Besides recognizing pathogens, also involved in the endoplasmic reticulum stress response: acts by sensing and binding to the cytosolic metabolite sphingosine-1-phosphate generated in response to endoplasmic reticulum stress, initiating an inflammation process that leads to activation of the NF-kappa-B and MAP kinases signaling. In addition, plays a role in insulin trafficking in beta cells in a cell-autonomous manner. Mechanistically, upon recognizing cognate ligands, NOD1 and RIPK2 localize to insulin vesicles where they recruit RAB1A to direct insulin trafficking through the cytoplasm. The protein is Nucleotide-binding oligomerization domain-containing protein 1 of Mus musculus (Mouse).